Here is a 465-residue protein sequence, read N- to C-terminus: Cysteine--tRNA ligase (465 aa).

Position 27 (C27) interacts with Zn(2+). Positions P29–H39 match the 'HIGH' region motif. Residues D153–K173 are disordered. Residues C208, H237, and E241 each coordinate Zn(2+). Residues K269–S273 carry the 'KMSKS' region motif. K272 lines the ATP pocket.

The protein belongs to the class-I aminoacyl-tRNA synthetase family. Monomer. Zn(2+) serves as cofactor.

It is found in the cytoplasm. It carries out the reaction tRNA(Cys) + L-cysteine + ATP = L-cysteinyl-tRNA(Cys) + AMP + diphosphate. This Sulfurovum sp. (strain NBC37-1) protein is Cysteine--tRNA ligase.